A 345-amino-acid chain; its full sequence is Erythronate-4-phosphate dehydrogenase (345 aa).

Ser-45 lines the substrate pocket. The NAD(+) site is built by Asp-146 and Thr-174. Arg-207 is a catalytic residue. Asp-227 lines the NAD(+) pocket. The active site involves Glu-232. Residue His-249 is the Proton donor of the active site. Gly-252 is an NAD(+) binding site.

The protein belongs to the D-isomer specific 2-hydroxyacid dehydrogenase family. PdxB subfamily. As to quaternary structure, homodimer.

It localises to the cytoplasm. The enzyme catalyses 4-phospho-D-erythronate + NAD(+) = (R)-3-hydroxy-2-oxo-4-phosphooxybutanoate + NADH + H(+). Its pathway is cofactor biosynthesis; pyridoxine 5'-phosphate biosynthesis; pyridoxine 5'-phosphate from D-erythrose 4-phosphate: step 2/5. Catalyzes the oxidation of erythronate-4-phosphate to 3-hydroxy-2-oxo-4-phosphonooxybutanoate. This chain is Erythronate-4-phosphate dehydrogenase, found in Ruthia magnifica subsp. Calyptogena magnifica.